The following is a 279-amino-acid chain: Putative pyruvate, phosphate dikinase regulatory protein (279 aa).

ADP is bound at residue 153–160 (GVSRTSKT).

This sequence belongs to the pyruvate, phosphate/water dikinase regulatory protein family. PDRP subfamily.

The catalysed reaction is N(tele)-phospho-L-histidyl/L-threonyl-[pyruvate, phosphate dikinase] + ADP = N(tele)-phospho-L-histidyl/O-phospho-L-threonyl-[pyruvate, phosphate dikinase] + AMP + H(+). It catalyses the reaction N(tele)-phospho-L-histidyl/O-phospho-L-threonyl-[pyruvate, phosphate dikinase] + phosphate + H(+) = N(tele)-phospho-L-histidyl/L-threonyl-[pyruvate, phosphate dikinase] + diphosphate. Functionally, bifunctional serine/threonine kinase and phosphorylase involved in the regulation of the pyruvate, phosphate dikinase (PPDK) by catalyzing its phosphorylation/dephosphorylation. The chain is Putative pyruvate, phosphate dikinase regulatory protein from Rhodopseudomonas palustris (strain HaA2).